The sequence spans 370 residues: D-alanine--D-alanine ligase (370 aa).

In terms of domain architecture, ATP-grasp spans 144 to 352 (KKIFADAGIP…YGALIERLVD (209 aa)). 177–232 (EEVLTYPVFVKPANLGSSVGISKATNKKELVDAMTEAFLYDRRVVVEQGVVAREIE) serves as a coordination point for ATP. Positions 306, 319, and 321 each coordinate Mg(2+).

It belongs to the D-alanine--D-alanine ligase family. The cofactor is Mg(2+). Requires Mn(2+) as cofactor.

It localises to the cytoplasm. It carries out the reaction 2 D-alanine + ATP = D-alanyl-D-alanine + ADP + phosphate + H(+). It participates in cell wall biogenesis; peptidoglycan biosynthesis. Cell wall formation. The protein is D-alanine--D-alanine ligase of Listeria monocytogenes serovar 1/2a (strain ATCC BAA-679 / EGD-e).